A 422-amino-acid chain; its full sequence is Phospholipase D Z (422 aa).

A signal peptide spans 1–18; the sequence is MMMKLLFLIALFGCVVNS. N-linked (GlcNAc...) asparagine glycosylation is present at Asn53. The 28-residue stretch at 148 to 175 folds into the PLD phosphodiesterase 1 domain; sequence GAGILHTKVIVVDQVSAYLGSANLDWRS. Catalysis depends on residues His153, Lys155, and Asp160. 2 N-linked (GlcNAc...) asparagine glycosylation sites follow: Asn225 and Asn320. One can recognise a PLD phosphodiesterase 2 domain in the interval 357–383; the sequence is FTRVNHAKYMVTDEQSYVGTSNWSEDY. Residues His362, Lys364, and Asp369 contribute to the active site. Residue Asn378 is glycosylated (N-linked (GlcNAc...) asparagine).

The protein belongs to the phospholipase D family.

The enzyme catalyses a 1,2-diacyl-sn-glycero-3-phosphocholine + H2O = a 1,2-diacyl-sn-glycero-3-phosphate + choline + H(+). Its activity is regulated as follows. Inhibited by butan-1-ol. Hydrolyzes membrane phospholipids, such as PtdCho (phosphatidylcholine), producing the free headgroup and PtdOH (phosphatidic acid; signaling molecule on its own). The polypeptide is Phospholipase D Z (pldZ) (Dictyostelium discoideum (Social amoeba)).